Consider the following 103-residue polypeptide: MQNQRIRIRLKGFDHRLIDQSTAEIVETAKRTGAQVRGPIPLPTRKERFTVLISPHVNKDARDQYEIRTHKRLVDIVEPTEKTVDALMRLDLAAGVDVQISLG.

Belongs to the universal ribosomal protein uS10 family. As to quaternary structure, part of the 30S ribosomal subunit.

Its function is as follows. Involved in the binding of tRNA to the ribosomes. This Shewanella denitrificans (strain OS217 / ATCC BAA-1090 / DSM 15013) protein is Small ribosomal subunit protein uS10.